The primary structure comprises 156 residues: Cytochrome c-type biogenesis protein CcmE 1 (156 aa).

The Cytoplasmic segment spans residues 1-8 (MNATRKQR). Residues 9-29 (LCLVIGVLAAAALAVTLIVFA) traverse the membrane as a helical; Signal-anchor for type II membrane protein segment. The Periplasmic portion of the chain corresponds to 30-156 (LQRNMSYLFT…ATAAPLTTPR (127 aa)). Residues His-123 and Tyr-127 each contribute to the heme site.

Belongs to the CcmE/CycJ family.

The protein localises to the cell inner membrane. Heme chaperone required for the biogenesis of c-type cytochromes. Transiently binds heme delivered by CcmC and transfers the heme to apo-cytochromes in a process facilitated by CcmF and CcmH. The polypeptide is Cytochrome c-type biogenesis protein CcmE 1 (Xanthomonas oryzae pv. oryzae (strain MAFF 311018)).